We begin with the raw amino-acid sequence, 37 residues long: ATP synthase subunit O, mitochondrial (37 aa).

It belongs to the ATPase delta chain family. F-type ATPases have 2 components, CF(1) - the catalytic core - and CF(0) - the membrane proton channel. CF(1) has five subunits: alpha(3), beta(3), gamma(1), delta(1), epsilon(1). CF(0) has three main subunits: a, b and c.

It is found in the mitochondrion. The protein resides in the mitochondrion inner membrane. Functionally, mitochondrial membrane ATP synthase (F(1)F(0) ATP synthase or Complex V) produces ATP from ADP in the presence of a proton gradient across the membrane which is generated by electron transport complexes of the respiratory chain. F-type ATPases consist of two structural domains, F(1) - containing the extramembraneous catalytic core and F(0) - containing the membrane proton channel, linked together by a central stalk and a peripheral stalk. During catalysis, ATP synthesis in the catalytic domain of F(1) is coupled via a rotary mechanism of the central stalk subunits to proton translocation. Part of the complex F(0) domain and the peripheric stalk, which acts as a stator to hold the catalytic alpha(3)beta(3) subcomplex and subunit a/ATP6 static relative to the rotary elements. This chain is ATP synthase subunit O, mitochondrial, found in Solanum tuberosum (Potato).